The primary structure comprises 235 residues: Lipoprotein-releasing system ATP-binding protein LolD (235 aa).

Residues 5-235 (LECRDIRKVY…LMTESASVEG (231 aa)) enclose the ABC transporter domain. 41-48 (GSSGSGKS) provides a ligand contact to ATP.

This sequence belongs to the ABC transporter superfamily. Lipoprotein translocase (TC 3.A.1.125) family. The complex is composed of two ATP-binding proteins (LolD) and two transmembrane proteins (LolC and LolE).

It is found in the cell inner membrane. In terms of biological role, part of the ABC transporter complex LolCDE involved in the translocation of mature outer membrane-directed lipoproteins, from the inner membrane to the periplasmic chaperone, LolA. Responsible for the formation of the LolA-lipoprotein complex in an ATP-dependent manner. In Vibrio parahaemolyticus serotype O3:K6 (strain RIMD 2210633), this protein is Lipoprotein-releasing system ATP-binding protein LolD.